Consider the following 469-residue polypeptide: ATP-dependent protease ATPase subunit HslU (469 aa).

Residues isoleucine 24, 66–71 (GVGKTE), aspartate 282, glutamate 347, and arginine 419 each bind ATP.

Belongs to the ClpX chaperone family. HslU subfamily. In terms of assembly, a double ring-shaped homohexamer of HslV is capped on each side by a ring-shaped HslU homohexamer. The assembly of the HslU/HslV complex is dependent on binding of ATP.

It localises to the cytoplasm. ATPase subunit of a proteasome-like degradation complex; this subunit has chaperone activity. The binding of ATP and its subsequent hydrolysis by HslU are essential for unfolding of protein substrates subsequently hydrolyzed by HslV. HslU recognizes the N-terminal part of its protein substrates and unfolds these before they are guided to HslV for hydrolysis. This Listeria welshimeri serovar 6b (strain ATCC 35897 / DSM 20650 / CCUG 15529 / CIP 8149 / NCTC 11857 / SLCC 5334 / V8) protein is ATP-dependent protease ATPase subunit HslU.